The sequence spans 70 residues: Protein SlyX homolog (70 aa).

This sequence belongs to the SlyX family.

This is Protein SlyX homolog from Shewanella sediminis (strain HAW-EB3).